We begin with the raw amino-acid sequence, 393 residues long: Staphopain B (393 aa).

The N-terminal stretch at 1–36 (MNSSCKTRVFNIISIIMVSMLILSLGAFANNNKAKA) is a signal peptide. A propeptide spanning residues 37 to 219 (DSHSKQLEIN…KVEENEAIQE (183 aa)) is cleaved from the precursor. Catalysis depends on residues Cys-243, His-340, and Asn-360.

It belongs to the peptidase C47 family. As to quaternary structure, in the cytoplasm, prematurely activated/folded SspB forms a stable non-covalent complex with SspC. Proteolytically cleaved by staphylococcal serine protease (SspA).

It localises to the secreted. Its activity is regulated as follows. Prematurely activated/folded staphopain B is inhibited by staphostatin B (SspC), which is probably required to protect staphylococcal cytoplasmic proteins from degradation by SspB. Functionally, cysteine protease that plays an important role in the inhibition of host innate immune response. Degrades host elastin, fibrogen, fibronectin and kininogen. Blocks phagocytosis of opsonised S.aureus by neutrophils and monocytes by inducing their death in a proteolytic activity-dependent manner. Decreases surface expression of the 'don't eat me' signal CD31 on neutrophils. Cleaves host galectin-3/LGALS3, thereby inhibiting the neutrophil-activating ability of the lectin. The polypeptide is Staphopain B (sspB) (Staphylococcus aureus).